Reading from the N-terminus, the 341-residue chain is S-adenosylmethionine:tRNA ribosyltransferase-isomerase (341 aa).

This sequence belongs to the QueA family. Monomer.

The protein resides in the cytoplasm. It catalyses the reaction 7-aminomethyl-7-carbaguanosine(34) in tRNA + S-adenosyl-L-methionine = epoxyqueuosine(34) in tRNA + adenine + L-methionine + 2 H(+). It functions in the pathway tRNA modification; tRNA-queuosine biosynthesis. Functionally, transfers and isomerizes the ribose moiety from AdoMet to the 7-aminomethyl group of 7-deazaguanine (preQ1-tRNA) to give epoxyqueuosine (oQ-tRNA). This is S-adenosylmethionine:tRNA ribosyltransferase-isomerase from Staphylococcus epidermidis (strain ATCC 12228 / FDA PCI 1200).